The following is a 1321-amino-acid chain: Bile salt export pump (1321 aa).

Topologically, residues 1 to 62 are cytoplasmic; it reads MSDSVILRSV…FSSSKDNWLM (62 aa). In terms of domain architecture, ABC transmembrane type-1 1 spans 62–385; it reads MFMGSVCALL…ASSCLEIFST (324 aa). The chain crosses the membrane as a helical span at residues 63–83; it reads FMGSVCALLHGMAQPGMIIVF. At 84-147 the chain is on the extracellular side; sequence GILTDIFVEY…VIKFSGIYAG (64 aa). N-linked (GlcNAc...) asparagine glycans are attached at residues Asn109, Asn116, Asn122, and Asn125. The chain crosses the membrane as a helical span at residues 148–168; sequence VGVAVLILGYFQIRLWVITGA. Over 169–215 the chain is Cytoplasmic; the sequence is RQIRKMRKFYFRRIMRMEIGWFDCTSVGELNSRFSDDINKIDEAIAD. The helical transmembrane segment at 216-236 threads the bilayer; the sequence is QMALFLQRLSTALSGLLLGFY. Over 237–240 the chain is Extracellular; the sequence is RGWK. A helical transmembrane segment spans residues 241 to 261; that stretch reads LTLVILAVSPLIGIGAAVIGL. At 262-319 the chain is on the cytoplasmic side; that stretch reads SVAKFTELELKAYAKAGSIADEVLSSIRTVAAFGGENKEVERYEKNLMFAQRWGIWKG. A helical membrane pass occupies residues 320 to 340; the sequence is MVMGFFTGYMWCLIFFCYALA. The Extracellular segment spans residues 341–353; it reads FWYGSRLVLDEGE. Residues 354–374 traverse the membrane as a helical segment; that stretch reads YTPGTLIQIFLCVIIAAMNIG. Residues 375 to 755 are Cytoplasmic-facing; that stretch reads NASSCLEIFS…KYNISEWPYI (381 aa). Residues 420–656 form the ABC transporter 1 domain; that stretch reads IEFHNVTFHY…KGVYFMLVTL (237 aa). 455-462 lines the ATP pocket; it reads GSSGAGKS. Thr586 is modified (phosphothreonine). Ser587 carries the phosphoserine modification. The tract at residues 651-674 is interaction with HAX1; the sequence is FMLVTLQSQEDNTHKETGIKGKDT. The segment covering 662-684 has biased composition (basic and acidic residues); that stretch reads NTHKETGIKGKDTTEGDTPERTF. The interval 662 to 722 is disordered; it reads NTHKETGIKG…PLAIGDHKSS (61 aa). A phosphoserine mark is found at Ser692, Ser703, and Ser706. Residues 755-1043 form the ABC transmembrane type-1 2 domain; it reads ILVGALCAAI…TFSYTPSYAK (289 aa). A helical membrane pass occupies residues 756–776; the sequence is LVGALCAAINGAVTPIYSLLF. The Extracellular segment spans residues 777–794; the sequence is SQILKTFSLVDKEQQRSE. The helical transmembrane segment at 795–815 threads the bilayer; sequence IYSMCLFFVILGCVSLFTQFL. Residues 816–869 are Cytoplasmic-facing; sequence QGYNFAKSGELLTKRLRKFGFKAMLRQDIGWFDDLKNNPGVLTTRLATDASQVQ. Helical transmembrane passes span 870-890 and 891-911; these read GATG…FVAV and LIAF…FPFL. Residues 912–979 lie on the Cytoplasmic side of the membrane; sequence ALSGAVQTKM…SYKTAIRKAN (68 aa). Residues 980–1000 traverse the membrane as a helical segment; that stretch reads VYGLCYAFSQGISFLANSAAY. Over 1001–1011 the chain is Extracellular; sequence RYGGYLIVYED. The chain crosses the membrane as a helical span at residues 1012 to 1032; the sequence is LNFSYVFRVVSSIAMSATAVG. Over 1033–1321 the chain is Cytoplasmic; the sequence is RTFSYTPSYA…KLVITGAPIS (289 aa). The ABC transporter 2 domain occupies 1078–1316; the sequence is IDFIDCKFTY…KGAYYKLVIT (239 aa). Residue 1113–1120 participates in ATP binding; sequence GSSGCGKS. A Phosphoserine modification is found at Ser1321.

Belongs to the ABC transporter superfamily. ABCB family. Multidrug resistance exporter (TC 3.A.1.201) subfamily. Interacts with HAX1. Interacts with the adapter protein complex 2 (AP-2) throught AP2A2 or AP2A1; this interaction regulates cell membrane expression of ABCB11 through its internalization in a clathrin-dependent manner and its subsequent degradation. Post-translationally, N-glycosylated. Ubiquitinated; short-chain ubiquitination regulates cell-Surface expression of ABCB11. Expressed predominantly, if not exclusively in the liver, where it was further localized to the canalicular microvilli and to subcanalicular vesicles of the hepatocytes by in situ.

It localises to the apical cell membrane. The protein resides in the recycling endosome membrane. Its subcellular location is the endosome. The protein localises to the cell membrane. It catalyses the reaction cholate(in) + ATP + H2O = cholate(out) + ADP + phosphate + H(+). It carries out the reaction taurocholate(in) + ATP + H2O = taurocholate(out) + ADP + phosphate + H(+). The catalysed reaction is glycocholate(in) + ATP + H2O = glycocholate(out) + ADP + phosphate + H(+). The enzyme catalyses glycochenodeoxycholate(in) + ATP + H2O = glycochenodeoxycholate(out) + ADP + phosphate + H(+). It catalyses the reaction taurochenodeoxycholate(in) + ATP + H2O = taurochenodeoxycholate(out) + ADP + phosphate + H(+). It carries out the reaction glycoursodeoxycholate(in) + ATP + H2O = glycoursodeoxycholate(out) + ADP + phosphate + H(+). The catalysed reaction is tauroursodeoxycholate(in) + ATP + H2O = tauroursodeoxycholate(out) + ADP + phosphate + H(+). The enzyme catalyses taurodeoxycholate(in) + ATP + H2O = taurodeoxycholate(out) + ADP + phosphate + H(+). It catalyses the reaction taurolithocholate 3-sulfate(in) + ATP + H2O = taurolithocholate 3-sulfate(out) + ADP + phosphate + H(+). It carries out the reaction pravastatin(in) + ATP + H2O = pravastatin(out) + ADP + phosphate + H(+). Its activity is regulated as follows. The uptake of taurocholate is inhibited by taurolithocholate sulfate with an IC(50) of 9 uM. Pravastatin competitively inhibits the transport of taurocholic acid. Cyclosporin A, glibenclamide, rifampicin and troglitazonestrongly competitively inhibit the transport activity of taurocholate. The canalicular transport activity of taurocholate is strongly dependent on canalicular membrane cholesterol content. The uptake of taurocholate is increased by short- and medium-chain fatty acids. Cholesterol increases transport capacity of taurocholate without affecting the affinity for the substrate. Catalyzes the transport of the major hydrophobic bile salts, such as taurine and glycine-conjugated cholic acid across the canalicular membrane of hepatocytes in an ATP-dependent manner, therefore participates in hepatic bile acid homeostasis and consequently to lipid homeostasis through regulation of biliary lipid secretion in a bile salts dependent manner. Transports taurine-conjugated bile salts more rapidly than glycine-conjugated bile salts. Also transports non-bile acid compounds, such as pravastatin and fexofenadine in an ATP-dependent manner and may be involved in their biliary excretion. The sequence is that of Bile salt export pump from Mus musculus (Mouse).